Here is a 937-residue protein sequence, read N- to C-terminus: Chromatin assembly factor 1 subunit A (937 aa).

The disordered stretch occupies residues 21 to 69; the sequence is RLPFKRLNPVPKEKHDAEAEGKKGKCSKSGLGQSKDSSTDTLHASTDNM. The segment covering 31-43 has biased composition (basic and acidic residues); the sequence is PKEKHDAEAEGKK. The span at 59-69 shows a compositional bias: polar residues; it reads TDTLHASTDNM. The PxVxL motif signature appears at 213–226; sequence FEGKMPVVLLEDIM. Disordered regions lie at residues 250-386, 574-614, 753-778, 831-851, and 910-937; these read SHEG…EKRK, VDSD…IPHG, GDTS…VPSK, SGKE…TPVS, and TVTE…SNTV. Positions 255-269 are enriched in low complexity; it reads SVLTNSSLSSLSVSS. The span at 301 to 386 shows a compositional bias: basic and acidic residues; the sequence is SSAEKEKLRL…KLRVKEEKRK (86 aa). Acidic residues-rich tracts occupy residues 574–586 and 594–608; these read VDSD…EEPG and GDDE…DDDG. The span at 756-766 shows a compositional bias: polar residues; that stretch reads SPVSPNTSRPQ.

This sequence belongs to the CHAF1A family. Subunit of the CAF-1 complex that contains RBBP4, CHAF1B and CHAF1A. Interacts with CHAF1B, PCNA and RBBP4.

It is found in the nucleus. Functionally, acts as a component of the histone chaperone complex chromatin assembly factor 1 (CAF-1), which assembles histone octamers onto DNA during replication and repair. CAF-1 performs the first step of the nucleosome assembly process, bringing newly synthesized histones H3 and H4 to replicating DNA; histones H2A/H2B can bind to this chromatin precursor subsequent to DNA replication to complete the histone octamer. This chain is Chromatin assembly factor 1 subunit A (CHAF1A), found in Gallus gallus (Chicken).